Reading from the N-terminus, the 53-residue chain is ATP synthase protein 8 (53 aa).

Residues 4–24 (MAPISWLLLFIVFSITFILFC) form a helical membrane-spanning segment.

It belongs to the ATPase protein 8 family. F-type ATPases have 2 components, CF(1) - the catalytic core - and CF(0) - the membrane proton channel.

It localises to the mitochondrion membrane. Functionally, mitochondrial membrane ATP synthase (F(1)F(0) ATP synthase or Complex V) produces ATP from ADP in the presence of a proton gradient across the membrane which is generated by electron transport complexes of the respiratory chain. F-type ATPases consist of two structural domains, F(1) - containing the extramembraneous catalytic core and F(0) - containing the membrane proton channel, linked together by a central stalk and a peripheral stalk. During catalysis, ATP synthesis in the catalytic domain of F(1) is coupled via a rotary mechanism of the central stalk subunits to proton translocation. Part of the complex F(0) domain. Minor subunit located with subunit a in the membrane. The polypeptide is ATP synthase protein 8 (mt:ATPase8) (Drosophila yakuba (Fruit fly)).